The following is a 475-amino-acid chain: Putative UDP-glucose glucosyltransferase (475 aa).

Belongs to the UDP-glycosyltransferase family.

The protein is Putative UDP-glucose glucosyltransferase of Fragaria ananassa (Strawberry).